A 360-amino-acid polypeptide reads, in one-letter code: 3-dehydroquinate synthase (360 aa).

Residues 69-74, 103-107, 127-128, K140, K149, and 167-170 each bind NAD(+); these read DGEKYK, GVVGD, TT, and TLDT. Zn(2+) contacts are provided by E182, H246, and H263.

It belongs to the sugar phosphate cyclases superfamily. Dehydroquinate synthase family. Requires Co(2+) as cofactor. It depends on Zn(2+) as a cofactor. NAD(+) serves as cofactor.

It localises to the cytoplasm. The enzyme catalyses 7-phospho-2-dehydro-3-deoxy-D-arabino-heptonate = 3-dehydroquinate + phosphate. It functions in the pathway metabolic intermediate biosynthesis; chorismate biosynthesis; chorismate from D-erythrose 4-phosphate and phosphoenolpyruvate: step 2/7. In terms of biological role, catalyzes the conversion of 3-deoxy-D-arabino-heptulosonate 7-phosphate (DAHP) to dehydroquinate (DHQ). The chain is 3-dehydroquinate synthase from Vesicomyosocius okutanii subsp. Calyptogena okutanii (strain HA).